A 947-amino-acid polypeptide reads, in one-letter code: DNA mismatch repair protein MutS (947 aa).

Residue 620 to 627 coordinates ATP; sequence GPNMSGKS.

The protein belongs to the DNA mismatch repair MutS family.

In terms of biological role, this protein is involved in the repair of mismatches in DNA. It is possible that it carries out the mismatch recognition step. This protein has a weak ATPase activity. The sequence is that of DNA mismatch repair protein MutS from Clostridioides difficile (strain 630) (Peptoclostridium difficile).